A 433-amino-acid chain; its full sequence is ATP-dependent protease ATPase subunit HslU (433 aa).

ATP-binding positions include Val18, 60–65 (GVGKTE), Asp246, Glu311, and Arg383.

The protein belongs to the ClpX chaperone family. HslU subfamily. As to quaternary structure, a double ring-shaped homohexamer of HslV is capped on each side by a ring-shaped HslU homohexamer. The assembly of the HslU/HslV complex is dependent on binding of ATP.

It is found in the cytoplasm. Its function is as follows. ATPase subunit of a proteasome-like degradation complex; this subunit has chaperone activity. The binding of ATP and its subsequent hydrolysis by HslU are essential for unfolding of protein substrates subsequently hydrolyzed by HslV. HslU recognizes the N-terminal part of its protein substrates and unfolds these before they are guided to HslV for hydrolysis. In Rhodopseudomonas palustris (strain BisB5), this protein is ATP-dependent protease ATPase subunit HslU.